The primary structure comprises 187 residues: Dirigent protein 6 (187 aa).

A signal peptide spans 1 to 29 (MAFLVEKQLFKALFSFFLLVLLFSDTVLS). A disulfide bridge links C40 with C186. N-linked (GlcNAc...) asparagine glycosylation is found at N59 and N123.

Belongs to the plant dirigent protein family. Homodimer. As to expression, expressed in roots, cotyledon veins, leaf trichomes, flowers, siliques, and meristems. Present in interfascicular/vascular cambia and developing xylem.

Its subcellular location is the secreted. It localises to the extracellular space. The protein resides in the apoplast. Its function is as follows. Dirigent proteins impart stereoselectivity on the phenoxy radical-coupling reaction, yielding optically active lignans from two molecules of coniferyl alcohol in the biosynthesis of lignans, flavonolignans, and alkaloids and thus plays a central role in plant secondary metabolism. Enantiocomplementary dirigent protein that mediates the laccase-catalyzed enantioselective oxidative phenol coupling of (E)-coniferyl alcohol to (-)-pinoresinol. In Arabidopsis thaliana (Mouse-ear cress), this protein is Dirigent protein 6 (DIR6).